The following is a 351-amino-acid chain: Cobalt-precorrin-5B C(1)-methyltransferase (351 aa).

The protein belongs to the CbiD family.

The enzyme catalyses Co-precorrin-5B + S-adenosyl-L-methionine = Co-precorrin-6A + S-adenosyl-L-homocysteine. It functions in the pathway cofactor biosynthesis; adenosylcobalamin biosynthesis; cob(II)yrinate a,c-diamide from sirohydrochlorin (anaerobic route): step 6/10. Catalyzes the methylation of C-1 in cobalt-precorrin-5B to form cobalt-precorrin-6A. This chain is Cobalt-precorrin-5B C(1)-methyltransferase, found in Thermosipho africanus (strain TCF52B).